The sequence spans 343 residues: Small ribosomal subunit biogenesis GTPase RsgA (343 aa).

The 160-residue stretch at 116–275 (RGQLKPVAAN…LIDSPGIREF (160 aa)) folds into the CP-type G domain. Residues 163 to 166 (NKAD) and 217 to 225 (GQSGVGKSS) each bind GTP. 4 residues coordinate Zn(2+): cysteine 299, cysteine 304, histidine 306, and cysteine 312.

Belongs to the TRAFAC class YlqF/YawG GTPase family. RsgA subfamily. As to quaternary structure, monomer. Associates with 30S ribosomal subunit, binds 16S rRNA. Zn(2+) serves as cofactor.

It localises to the cytoplasm. Its function is as follows. One of several proteins that assist in the late maturation steps of the functional core of the 30S ribosomal subunit. Helps release RbfA from mature subunits. May play a role in the assembly of ribosomal proteins into the subunit. Circularly permuted GTPase that catalyzes slow GTP hydrolysis, GTPase activity is stimulated by the 30S ribosomal subunit. The chain is Small ribosomal subunit biogenesis GTPase RsgA from Pseudomonas fluorescens (strain ATCC BAA-477 / NRRL B-23932 / Pf-5).